Here is a 606-residue protein sequence, read N- to C-terminus: NADH-ubiquinone oxidoreductase chain 5 (606 aa).

Helical transmembrane passes span 1-21 (MNMF…PIIM), 43-63 (AFMI…ETII), 87-107 (MIFV…SMWY), 117-137 (FFKY…ANNM), 140-160 (LFIG…WWYG), 171-191 (AVLY…WFLL), 241-261 (TPVS…FLLI), 273-293 (IQTL…ICAL), 310-330 (LGLM…LHIC), 365-385 (VLPF…GMPF), 409-429 (LLIT…IMFF), 457-477 (LLIG…PTTI), 488-508 (MTAL…NLTT), and 582-602 (GLIK…LLIL).

It belongs to the complex I subunit 5 family. In terms of assembly, core subunit of respiratory chain NADH dehydrogenase (Complex I) which is composed of 45 different subunits.

The protein resides in the mitochondrion inner membrane. It catalyses the reaction a ubiquinone + NADH + 5 H(+)(in) = a ubiquinol + NAD(+) + 4 H(+)(out). Functionally, core subunit of the mitochondrial membrane respiratory chain NADH dehydrogenase (Complex I) which catalyzes electron transfer from NADH through the respiratory chain, using ubiquinone as an electron acceptor. Essential for the catalytic activity and assembly of complex I. The protein is NADH-ubiquinone oxidoreductase chain 5 (MT-ND5) of Canis lupus (Gray wolf).